We begin with the raw amino-acid sequence, 156 residues long: RNA pyrophosphohydrolase (156 aa).

The 143-residue stretch at 6-148 (NYRPNVAAIV…KKNIYVRVIK (143 aa)) folds into the Nudix hydrolase domain. Positions 43-64 (GGIDKGESVKNALFRELKEEIG) match the Nudix box motif.

This sequence belongs to the Nudix hydrolase family. RppH subfamily. The cofactor is a divalent metal cation.

In terms of biological role, accelerates the degradation of transcripts by removing pyrophosphate from the 5'-end of triphosphorylated RNA, leading to a more labile monophosphorylated state that can stimulate subsequent ribonuclease cleavage. The protein is RNA pyrophosphohydrolase of Campylobacter jejuni subsp. jejuni serotype O:2 (strain ATCC 700819 / NCTC 11168).